Consider the following 336-residue polypeptide: S-adenosylmethionine:tRNA ribosyltransferase-isomerase (336 aa).

The protein belongs to the QueA family. In terms of assembly, monomer.

Its subcellular location is the cytoplasm. The catalysed reaction is 7-aminomethyl-7-carbaguanosine(34) in tRNA + S-adenosyl-L-methionine = epoxyqueuosine(34) in tRNA + adenine + L-methionine + 2 H(+). The protein operates within tRNA modification; tRNA-queuosine biosynthesis. In terms of biological role, transfers and isomerizes the ribose moiety from AdoMet to the 7-aminomethyl group of 7-deazaguanine (preQ1-tRNA) to give epoxyqueuosine (oQ-tRNA). This chain is S-adenosylmethionine:tRNA ribosyltransferase-isomerase, found in Sulfurihydrogenibium sp. (strain YO3AOP1).